The chain runs to 459 residues: Cysteine--tRNA ligase (459 aa).

Residue Cys-28 participates in Zn(2+) binding. Positions 30–40 (VTVYDLCHIGH) match the 'HIGH' region motif. 3 residues coordinate Zn(2+): Cys-209, His-234, and Glu-238. A 'KMSKS' region motif is present at residues 266–270 (KMSKS). ATP is bound at residue Lys-269.

It belongs to the class-I aminoacyl-tRNA synthetase family. As to quaternary structure, monomer. Zn(2+) serves as cofactor.

Its subcellular location is the cytoplasm. It catalyses the reaction tRNA(Cys) + L-cysteine + ATP = L-cysteinyl-tRNA(Cys) + AMP + diphosphate. This chain is Cysteine--tRNA ligase, found in Haemophilus influenzae (strain PittGG).